The sequence spans 332 residues: UPF0194 membrane protein YbhG (332 aa).

The N-terminal stretch at 1–16 is a signal peptide; sequence MMKKPVVIGLAVVVLA. A coiled-coil region spans residues 108-209; it reads EEIAQAAAAV…LNLQDSTLIA (102 aa).

It belongs to the UPF0194 family.

It is found in the periplasm. The sequence is that of UPF0194 membrane protein YbhG from Shigella boydii serotype 4 (strain Sb227).